A 341-amino-acid polypeptide reads, in one-letter code: Zinc finger protein ZIC 4 (341 aa).

The disordered stretch occupies residues 36-66 (HHGPQLAASSNPSVLPGLHEQPPQASHSRPL). Residues 135 to 169 (LICKWLGDDSPMSPRPCSKTFSTMHELVTHVTVEH) form a C2H2-type 1; atypical zinc finger. A C2H2-type 2; atypical zinc finger spans residues 178-205 (HICFWEECPRQGKPFKAKYKLVNHIRVH). C2H2-type zinc fingers lie at residues 211–235 (FPCP…KRTH), 241–265 (FRCE…SHVH), and 271–295 (YMCK…MKVH). Residues 289 to 309 (RKHMKVHGRSPPPSSGYDSAI) are disordered.

This sequence belongs to the GLI C2H2-type zinc-finger protein family. Exclusively expressed in the cerebellum.

It is found in the nucleus. Its function is as follows. Binds to DNA. The chain is Zinc finger protein ZIC 4 (Zic4) from Mus musculus (Mouse).